A 544-amino-acid chain; its full sequence is Chaperonin GroEL 1 (544 aa).

ATP is bound by residues 30–33 (TLGP), lysine 51, 87–91 (DGTTT), glycine 415, 481–483 (DAL), and aspartate 497.

Belongs to the chaperonin (HSP60) family. As to quaternary structure, forms a cylinder of 14 subunits composed of two heptameric rings stacked back-to-back. Interacts with the co-chaperonin GroES.

It is found in the cytoplasm. The enzyme catalyses ATP + H2O + a folded polypeptide = ADP + phosphate + an unfolded polypeptide.. In terms of biological role, together with its co-chaperonin GroES, plays an essential role in assisting protein folding. The GroEL-GroES system forms a nano-cage that allows encapsulation of the non-native substrate proteins and provides a physical environment optimized to promote and accelerate protein folding. The chain is Chaperonin GroEL 1 from Chlamydia caviae (strain ATCC VR-813 / DSM 19441 / 03DC25 / GPIC) (Chlamydophila caviae).